The chain runs to 2511 residues: Fatty acid synthase (2511 aa).

Methionine 1 is subject to N-acetylmethionine. The Ketosynthase family 3 (KS3) domain occupies methionine 1–proline 406. A Phosphoserine modification is found at serine 63. The residue at position 70 (lysine 70) is an N6-acetyllysine. Residue cysteine 161 is the For beta-ketoacyl synthase activity of the active site. Residue serine 207 is modified to Phosphoserine. Histidine 293 acts as the For beta-ketoacyl synthase activity in catalysis. An N6-acetyllysine modification is found at lysine 298. Residue histidine 331 is the For beta-ketoacyl synthase activity of the active site. Residues arginine 429–proline 817 form an acyl and malonyl transferases region. 2 positions are modified to N6-acetyllysine: lysine 436 and lysine 528. The active-site For malonyltransferase activity is serine 581. Residues aspartate 647–threonine 648 and phenylalanine 671 contribute to the an acyl-CoA site. Lysine 673 bears the N6-acetyllysine mark. Serine 725 is subject to Phosphoserine. Arginine 773 provides a ligand contact to an acyl-CoA. Residues histidine 838–proline 966 form an N-terminal hotdog fold region. One can recognise a PKS/mFAS DH domain in the interval histidine 838–glutamate 1108. Histidine 878 serves as the catalytic Proton acceptor; for dehydratase activity. A C-terminal hotdog fold region spans residues glutamate 981–glutamate 1108. N6-acetyllysine is present on lysine 992. Aspartate 1031 functions as the Proton donor; for dehydratase activity in the catalytic mechanism. Phosphoserine is present on residues serine 1174 and serine 1411. Position 1471 is an S-nitrosocysteine (cysteine 1471). Phosphoserine is present on residues serine 1584 and serine 1594. An enoyl reductase region spans residues aspartate 1635 to alanine 1863. Position 1671-1688 (leucine 1671–alanine 1688) interacts with NADP(+). Position 1704 is an N6-(pyridoxal phosphate)lysine; alternate (lysine 1704). N6-acetyllysine; alternate is present on lysine 1704. N6-acetyllysine occurs at positions 1771 and 1847. The tract at residues valine 1864–tyrosine 2118 is beta-ketoacyl reductase. Serine 1886–alanine 1901 contacts NADP(+). Lysine 1995 bears the N6-acetyllysine mark. At cysteine 2091 the chain carries S-nitrosocysteine. In terms of domain architecture, Carrier spans arginine 2121–serine 2198. Serine 2156 is modified (O-(pantetheine 4'-phosphoryl)serine; alternate). Residue serine 2156 is modified to Phosphoserine; alternate. Serine 2198 bears the Phosphoserine mark. Phosphothreonine occurs at positions 2204 and 2215. The tract at residues glutamate 2207–glycine 2511 is thioesterase. Serine 2236 carries the phosphoserine modification. Serine 2308 serves as the catalytic For thioesterase activity. An N6-acetyllysine modification is found at lysine 2391. Lysine 2449 is covalently cross-linked (Glycyl lysine isopeptide (Lys-Gly) (interchain with G-Cter in SUMO2)). Catalysis depends on histidine 2481, which acts as the For thioesterase activity.

As to quaternary structure, homodimer which is arranged in a head to tail fashion. Interacts with CEACAM1; this interaction is insulin and phosphorylation-dependent; reduces fatty-acid synthase activity. In terms of processing, S-nitrosylation of Fatty acid synthase at cysteine residues Cys-1471 or Cys-2091 is important for the enzyme dimerization. In adipocytes, S-nitrosylation of Fatty acid synthase occurs under physiological conditions and gradually increases during adipogenesis. As to expression, ubiquitous. Prominent expression in brain, lung, liver and mammary gland.

It localises to the cytoplasm. It is found in the melanosome. The enzyme catalyses acetyl-CoA + n malonyl-CoA + 2n NADPH + 2n H(+) = a long-chain fatty acid + (n+1) CoA + n CO2 + 2n NADP(+).. It catalyses the reaction holo-[ACP] + acetyl-CoA = acetyl-[ACP] + CoA. It carries out the reaction holo-[ACP] + malonyl-CoA = malonyl-[ACP] + CoA. The catalysed reaction is a fatty acyl-[ACP] + malonyl-[ACP] + H(+) = a 3-oxoacyl-[ACP] + holo-[ACP] + CO2. The enzyme catalyses a (3R)-hydroxyacyl-[ACP] + NADP(+) = a 3-oxoacyl-[ACP] + NADPH + H(+). It catalyses the reaction a (3R)-hydroxyacyl-[ACP] = a (2E)-enoyl-[ACP] + H2O. It carries out the reaction a 2,3-saturated acyl-[ACP] + NADP(+) = a (2E)-enoyl-[ACP] + NADPH + H(+). The catalysed reaction is hexadecanoyl-[ACP] + H2O = hexadecanoate + holo-[ACP] + H(+). The enzyme catalyses acetyl-[ACP] + malonyl-[ACP] + H(+) = 3-oxobutanoyl-[ACP] + holo-[ACP] + CO2. It catalyses the reaction 3-oxobutanoyl-[ACP] + NADPH + H(+) = (3R)-hydroxybutanoyl-[ACP] + NADP(+). It carries out the reaction (3R)-hydroxybutanoyl-[ACP] = (2E)-butenoyl-[ACP] + H2O. The catalysed reaction is (2E)-butenoyl-[ACP] + NADPH + H(+) = butanoyl-[ACP] + NADP(+). The enzyme catalyses butanoyl-[ACP] + malonyl-[ACP] + H(+) = 3-oxohexanoyl-[ACP] + holo-[ACP] + CO2. It catalyses the reaction 3-oxohexanoyl-[ACP] + NADPH + H(+) = (3R)-hydroxyhexanoyl-[ACP] + NADP(+). It carries out the reaction (3R)-hydroxyhexanoyl-[ACP] = (2E)-hexenoyl-[ACP] + H2O. The catalysed reaction is (2E)-hexenoyl-[ACP] + NADPH + H(+) = hexanoyl-[ACP] + NADP(+). The enzyme catalyses hexanoyl-[ACP] + malonyl-[ACP] + H(+) = 3-oxooctanoyl-[ACP] + holo-[ACP] + CO2. It catalyses the reaction 3-oxooctanoyl-[ACP] + NADPH + H(+) = (3R)-hydroxyoctanoyl-[ACP] + NADP(+). It carries out the reaction (3R)-hydroxyoctanoyl-[ACP] = (2E)-octenoyl-[ACP] + H2O. The catalysed reaction is (2E)-octenoyl-[ACP] + NADPH + H(+) = octanoyl-[ACP] + NADP(+). The enzyme catalyses octanoyl-[ACP] + malonyl-[ACP] + H(+) = 3-oxodecanoyl-[ACP] + holo-[ACP] + CO2. It catalyses the reaction 3-oxodecanoyl-[ACP] + NADPH + H(+) = (3R)-hydroxydecanoyl-[ACP] + NADP(+). It carries out the reaction (3R)-hydroxydecanoyl-[ACP] = (2E)-decenoyl-[ACP] + H2O. The catalysed reaction is (2E)-decenoyl-[ACP] + NADPH + H(+) = decanoyl-[ACP] + NADP(+). The enzyme catalyses decanoyl-[ACP] + malonyl-[ACP] + H(+) = 3-oxododecanoyl-[ACP] + holo-[ACP] + CO2. It catalyses the reaction 3-oxododecanoyl-[ACP] + NADPH + H(+) = (3R)-hydroxydodecanoyl-[ACP] + NADP(+). It carries out the reaction (3R)-hydroxydodecanoyl-[ACP] = (2E)-dodecenoyl-[ACP] + H2O. The catalysed reaction is (2E)-dodecenoyl-[ACP] + NADPH + H(+) = dodecanoyl-[ACP] + NADP(+). The enzyme catalyses dodecanoyl-[ACP] + malonyl-[ACP] + H(+) = 3-oxotetradecanoyl-[ACP] + holo-[ACP] + CO2. It catalyses the reaction 3-oxotetradecanoyl-[ACP] + NADPH + H(+) = (3R)-hydroxytetradecanoyl-[ACP] + NADP(+). It carries out the reaction (3R)-hydroxytetradecanoyl-[ACP] = (2E)-tetradecenoyl-[ACP] + H2O. The catalysed reaction is (2E)-tetradecenoyl-[ACP] + NADPH + H(+) = tetradecanoyl-[ACP] + NADP(+). The enzyme catalyses tetradecanoyl-[ACP] + malonyl-[ACP] + H(+) = 3-oxohexadecanoyl-[ACP] + holo-[ACP] + CO2. It catalyses the reaction 3-oxohexadecanoyl-[ACP] + NADPH + H(+) = (3R)-hydroxyhexadecanoyl-[ACP] + NADP(+). It carries out the reaction (3R)-hydroxyhexadecanoyl-[ACP] = (2E)-hexadecenoyl-[ACP] + H2O. The catalysed reaction is (2E)-hexadecenoyl-[ACP] + NADPH + H(+) = hexadecanoyl-[ACP] + NADP(+). The enzyme catalyses hexadecanoyl-[ACP] + malonyl-[ACP] + H(+) = 3-oxooctadecanoyl-[ACP] + holo-[ACP] + CO2. It catalyses the reaction 3-oxooctadecanoyl-[ACP] + NADPH + H(+) = (3R)-hydroxyoctadecanoyl-[ACP] + NADP(+). It carries out the reaction (3R)-hydroxyoctadecanoyl-[ACP] = (2E)-octadecenoyl-[ACP] + H2O. The catalysed reaction is (2E)-octadecenoyl-[ACP] + NADPH + H(+) = octadecanoyl-[ACP] + NADP(+). The enzyme catalyses tetradecanoyl-[ACP] + H2O = tetradecanoate + holo-[ACP] + H(+). It catalyses the reaction octadecanoyl-[ACP] + H2O = octadecanoate + holo-[ACP] + H(+). It participates in lipid metabolism; fatty acid biosynthesis. With respect to regulation, activated by S-nitrosylation which promotes enzyme dimerization. Cerulenin, a potent non-competitive pharmacological inhibitor of FAS, binds covalently to the active site of the condensing enzyme region, inactivating a key enzyme step in fatty acid synthesis. In terms of biological role, fatty acid synthetase is a multifunctional enzyme that catalyzes the de novo biosynthesis of long-chain saturated fatty acids starting from acetyl-CoA and malonyl-CoA in the presence of NADPH. This multifunctional protein contains 7 catalytic activities and a site for the binding of the prosthetic group 4'-phosphopantetheine of the acyl carrier protein ([ACP]) domain. Its function is as follows. (Microbial infection) Fatty acid synthetase activity is required for SARS coronavirus-2/SARS-CoV-2 replication. This Homo sapiens (Human) protein is Fatty acid synthase (FASN).